The following is a 1216-amino-acid chain: ATP-dependent DNA helicase Q4 (1216 aa).

2 disordered regions span residues 72 to 100 and 113 to 171; these read EAQEPSCWGPHLSRAATQNTQSMPKQSLL and NLKN…PRLG. Polar residues-rich tracts occupy residues 86–100 and 114–137; these read AATQNTQSMPKQSLL and LKNTTQTGPTQSRKLQLQKRSLST. Ser179 and Ser181 each carry phosphoserine. The segment at 235–340 is disordered; sequence SEVSVQSPEA…LHASPRPASL (106 aa). Composition is skewed to polar residues over residues 248-262 and 306-320; these read QPAQVLSQSPKSINS and TQVNVPQPCNSSNQA. The segment at 393–410 adopts a CCHC-type zinc-finger fold; that stretch reads DTCFRCGQFGHWASQCSQ. Positions 436 to 458 are disordered; the sequence is AQRTGTASCHHSGEETQPAAPEL. Residues 506–684 enclose the Helicase ATP-binding domain; sequence IMRILSGIST…AQHLGIAGEF (179 aa). Residue 519–526 coordinates ATP; sequence LPTGAGKS. A DEAH box motif is present at residues 627–630; sequence DEVH. In terms of domain architecture, Helicase C-terminal spans 705-872; that stretch reads DSDQALVTLL…AVKRLVQRVF (168 aa). The Zn(2+) site is built by Cys875, Cys877, Cys906, and His909.

It belongs to the helicase family. RecQ subfamily. As to quaternary structure, interacts with UBR1 and UBR2. Interacts with MCM10; this interaction regulates RECQL4 unwinding activity. Interacts with TOPBP1. Requires Zn(2+) as cofactor.

The protein localises to the cytoplasm. It localises to the nucleus. It catalyses the reaction Couples ATP hydrolysis with the unwinding of duplex DNA by translocating in the 3'-5' direction.. The catalysed reaction is ATP + H2O = ADP + phosphate + H(+). In terms of biological role, an ATP-dependent DNA helicase which unwinds dsDNA with a 3'-overhang in a 3'-5' direction. May play a role in development of the palate and the limbs. May modulate chromosome segregation. This chain is ATP-dependent DNA helicase Q4 (Recql4), found in Mus musculus (Mouse).